The sequence spans 547 residues: Chaperonin GroEL 1 (547 aa).

Residues 30 to 33 (TLGP), K51, 87 to 91 (DGTTT), G415, and D496 contribute to the ATP site.

The protein belongs to the chaperonin (HSP60) family. Forms a cylinder of 14 subunits composed of two heptameric rings stacked back-to-back. Interacts with the co-chaperonin GroES.

Its subcellular location is the cytoplasm. It catalyses the reaction ATP + H2O + a folded polypeptide = ADP + phosphate + an unfolded polypeptide.. Together with its co-chaperonin GroES, plays an essential role in assisting protein folding. The GroEL-GroES system forms a nano-cage that allows encapsulation of the non-native substrate proteins and provides a physical environment optimized to promote and accelerate protein folding. This is Chaperonin GroEL 1 from Rhodopseudomonas palustris (strain BisB18).